A 413-amino-acid chain; its full sequence is Arginine deiminase (413 aa).

The active-site Amidino-cysteine intermediate is Cys-403.

This sequence belongs to the arginine deiminase family.

The protein resides in the cytoplasm. The catalysed reaction is L-arginine + H2O = L-citrulline + NH4(+). Its pathway is amino-acid degradation; L-arginine degradation via ADI pathway; carbamoyl phosphate from L-arginine: step 1/2. This chain is Arginine deiminase, found in Clostridium perfringens (strain SM101 / Type A).